Reading from the N-terminus, the 79-residue chain is Large ribosomal subunit protein uL29 (79 aa).

This sequence belongs to the universal ribosomal protein uL29 family.

This chain is Large ribosomal subunit protein uL29, found in Gluconacetobacter diazotrophicus (strain ATCC 49037 / DSM 5601 / CCUG 37298 / CIP 103539 / LMG 7603 / PAl5).